Consider the following 1333-residue polypeptide: NPC1-like intracellular cholesterol transporter 1 (1333 aa).

Residues 1 to 20 (MAAAWQGWLLWALLLNSAQG) form the signal peptide. At 21–284 (ELYTPTHKAG…SFYMGRMPGW (264 aa)) the chain is on the extracellular side. Cystine bridges form between Cys32-Cys90, Cys38-Cys56, Cys77-Cys125, Cys91-Cys129, Cys113-Cys254, Cys116-Cys172, Cys189-Cys197, Cys243-Cys259, and Cys256-Cys263. The chain crosses the membrane as a helical span at residues 285–305 (LALIIIFTAVFVLLSVVLVYL). Residues 306–352 (RVASNRNKNKTAGSQEAPNLPRKRRFSPHTVLGRFFESWGTRVASWP) lie on the Cytoplasmic side of the membrane. The helical transmembrane segment at 353–373 (LTVLALSFIVVIALSVGLTFI) threads the bilayer. The Extracellular segment spans residues 374-632 (ELTTDPVELW…DEINRTTIQD (259 aa)). Cystine bridges form between Cys471/Cys485 and Cys525/Cys542. The SSD domain occupies 632–797 (DLPVFAISYL…MTAFVALLSL (166 aa)). Residues 633 to 653 (LPVFAISYLIVFLYISLALGS) traverse the membrane as a helical segment. Over 654–665 (YSRWSRVAVDSK) the chain is Cytoplasmic. A helical membrane pass occupies residues 666–686 (ATLGLGGVAVVLGAVVAAMGF). The Extracellular segment spans residues 687-696 (YSYLGVPSSL). The chain crosses the membrane as a helical span at residues 697 to 717 (VIIQVVPFLVLAVGADNIFIF). Over 718–742 (VLEYQRLPRMPGEQREAHIGRTLGS) the chain is Cytoplasmic. A helical transmembrane segment spans residues 743-763 (VAPSMLLCSLSEAICFFLGAL). Over 764 to 776 (TSMPAVRTFALTS) the chain is Extracellular. Residues 777–797 (GLAIIFDFLLQMTAFVALLSL) traverse the membrane as a helical segment. The Cytoplasmic portion of the chain corresponds to 798–846 (DSKRQEASRPDVVCCFSSRNLPPPKQKEGLLLCFFRKIYTPFLLHRFIR). The chain crosses the membrane as a helical span at residues 847–867 (PVVLLLFLVLFGANLYLMCNI). Topologically, residues 868–1113 (SVGLDQDLAL…QQYLTVLPEG (246 aa)) are extracellular. Disulfide bonds link Cys920–Cys925, Cys967–Cys1025, and Cys981–Cys990. A helical membrane pass occupies residues 1114–1134 (IFTLALCFVPTFVVCYLLLGL). The Cytoplasmic portion of the chain corresponds to 1135–1142 (DIRSGILN). The chain crosses the membrane as a helical span at residues 1143 to 1163 (LLSIIMILVDTIGLMAVWGIS). At 1164–1165 (YN) the chain is on the extracellular side. The chain crosses the membrane as a helical span at residues 1166 to 1186 (AVSLINLVTAVGMSVEFVSHI). At 1187-1206 (TRSFAVSTKPTRLERAKDAT) the chain is on the cytoplasmic side. The helical transmembrane segment at 1207 to 1227 (IFMGSAVFAGVAMTNFPGILI) threads the bilayer. Over 1228 to 1242 (LGFAQAQLIQIFFFR) the chain is Extracellular. A helical transmembrane segment spans residues 1243 to 1263 (LNLLITLLGLLHGLVFLPVVL). The Cytoplasmic portion of the chain corresponds to 1264 to 1333 (SYLGPDVNQA…SSLPKSDQKF (70 aa)).

It belongs to the patched family. Interacts with RAB11A, MYO5B and RAB11FIP2. Interaction with RAB11A, MYO5B and RAB11FIP2 is required for proper transport to the plasma membrane upon cholesterol depletion. Interacts with NPC2. Interacts with LIMA1. In terms of processing, highly glycosylated. In terms of tissue distribution, expressed in small intestine, stomach and muscle, along with detectable expression in lung, heart, gall bladder, brain, testis, skin and liver. Expression in liver is extremely low.

It is found in the apical cell membrane. Its subcellular location is the cell membrane. It catalyses the reaction cholesterol(in) = cholesterol(out). It carries out the reaction sitosterol(out) = sitosterol(in). Functionally, plays a major role in cholesterol homeostasis. Critical for the uptake of cholesterol across the plasma membrane of the intestinal enterocyte. Involved in plant sterol absorption, it transports sitosterol, although at lower rates than cholesterol. May have a function in the transport of multiple lipids and their homeostasis, thereby influencing lipid metabolism regulation. May be involved in caveolin trafficking from the plasma membrane. Acts as a negative regulator of NPC2 and down-regulates its expression and secretion by inhibiting its maturation and accelerating its degradation. This is NPC1-like intracellular cholesterol transporter 1 from Mus musculus (Mouse).